Reading from the N-terminus, the 176-residue chain is Nuclear ribonuclease Z (176 aa).

It belongs to the RNase Z family. As to quaternary structure, homodimer. It depends on Zn(2+) as a cofactor.

The protein localises to the nucleus. The catalysed reaction is Endonucleolytic cleavage of RNA, removing extra 3' nucleotides from tRNA precursor, generating 3' termini of tRNAs. A 3'-hydroxy group is left at the tRNA terminus and a 5'-phosphoryl group is left at the trailer molecule.. Zinc phosphodiesterase, which displays some tRNA 3'-processing endonuclease activity. Probably involved in tRNA maturation, by removing a 3'-trailer from precursor tRNA. This Triticum aestivum (Wheat) protein is Nuclear ribonuclease Z (ELAC).